A 453-amino-acid polypeptide reads, in one-letter code: Carbamoyl phosphate synthase arginine-specific small chain (453 aa).

The N-terminal 28 residues, Met1–Met28, are a transit peptide targeting the mitochondrion. Residues His219 to His406 form the Glutamine amidotransferase type-1 domain. The active-site Nucleophile is the Cys295. Catalysis depends on residues His379 and Glu381.

The protein belongs to the CarA family. Heterodimer composed of 2 chains; the small (or glutamine) chain promotes the hydrolysis of glutamine to ammonia, which is used by the large (or ammonia) chain to synthesize carbamoyl phosphate.

It localises to the mitochondrion matrix. It carries out the reaction hydrogencarbonate + L-glutamine + 2 ATP + H2O = carbamoyl phosphate + L-glutamate + 2 ADP + phosphate + 2 H(+). The enzyme catalyses L-glutamine + H2O = L-glutamate + NH4(+). Its pathway is amino-acid biosynthesis; L-arginine biosynthesis; carbamoyl phosphate from bicarbonate: step 1/1. In terms of biological role, small subunit of the arginine-specific carbamoyl phosphate synthase (CPSase). CPSase catalyzes the formation of carbamoyl phosphate from the ammonia moiety of glutamine, carbonate, and phosphate donated by ATP, the first step of the arginine biosynthetic pathway. The small subunit (glutamine amidotransferase) binds and cleaves glutamine to supply the large subunit with the substrate ammonia. The polypeptide is Carbamoyl phosphate synthase arginine-specific small chain (cpa1) (Aspergillus niger (strain ATCC MYA-4892 / CBS 513.88 / FGSC A1513)).